A 91-amino-acid chain; its full sequence is Small ribosomal subunit protein bS6 (91 aa).

Belongs to the bacterial ribosomal protein bS6 family.

Functionally, binds together with bS18 to 16S ribosomal RNA. The chain is Small ribosomal subunit protein bS6 from Leptospira biflexa serovar Patoc (strain Patoc 1 / Ames).